An 83-amino-acid chain; its full sequence is Small cysteine-rich protein 3 (83 aa).

The signal sequence occupies residues 1–21; the sequence is MGVKLNICLLLLLVAIISSQG. Positions 22–39 are excised as a propeptide; it reads FNLRKKEDSKDEKPFGNY. Residues 25–35 show a composition bias toward basic and acidic residues; the sequence is RKKEDSKDEKP. A disordered region spans residues 25 to 44; the sequence is RKKEDSKDEKPFGNYRRGSP.

This sequence belongs to the Cnidaria small cysteine-rich protein (SCRiP) family. alpha subfamily. Post-translationally, contains 4 disulfide bonds.

The protein resides in the secreted. It localises to the nematocyst. Functionally, this recombinant protein induces severe neurotoxicity on zebrafish larvae (Danio rerio) at a concentration of 230 mg/ml, but does not show toxicity when injected in blowfly larvae (Sarcophaga falculata). All fish incubated with this protein died within 16 hours of exposure. Has also been claimed to be implied in calcification, but this function seems improbable. This Acropora millepora (Staghorn coral) protein is Small cysteine-rich protein 3.